Reading from the N-terminus, the 104-residue chain is Nucleoid-associated protein PEPE_1483 (104 aa).

Residues 1–35 are disordered; it reads MRGGMGNMQSMMRQMQKMQKKVTEEQEKLNQTEFT. The segment covering 8-17 has biased composition (low complexity); sequence MQSMMRQMQK. Over residues 21 to 30 the composition is skewed to basic and acidic residues; sequence KVTEEQEKLN.

Belongs to the YbaB/EbfC family. Homodimer.

The protein localises to the cytoplasm. It localises to the nucleoid. Its function is as follows. Binds to DNA and alters its conformation. May be involved in regulation of gene expression, nucleoid organization and DNA protection. In Pediococcus pentosaceus (strain ATCC 25745 / CCUG 21536 / LMG 10740 / 183-1w), this protein is Nucleoid-associated protein PEPE_1483.